We begin with the raw amino-acid sequence, 179 residues long: Adenylyl-sulfate kinase (179 aa).

13 to 20 (GLSGAGKS) contributes to the ATP binding site. The active-site Phosphoserine intermediate is Ser87.

It belongs to the APS kinase family.

It catalyses the reaction adenosine 5'-phosphosulfate + ATP = 3'-phosphoadenylyl sulfate + ADP + H(+). The protein operates within sulfur metabolism; hydrogen sulfide biosynthesis; sulfite from sulfate: step 2/3. In terms of biological role, catalyzes the synthesis of activated sulfate. The chain is Adenylyl-sulfate kinase from Paraburkholderia xenovorans (strain LB400).